The following is a 282-amino-acid chain: Deoxyribonuclease-1 (282 aa).

An N-terminal signal peptide occupies residues M1–S22. A glycan (N-linked (GlcNAc...) asparagine) is linked at N40. The active site involves E100. Cysteines 123 and 126 form a disulfide. N128 carries an N-linked (GlcNAc...) asparagine glycan. The active site involves H156. The cysteines at positions 195 and 231 are disulfide-linked.

It belongs to the DNase I family. Ca(2+) is required as a cofactor. Requires Mg(2+) as cofactor.

The protein localises to the secreted. It is found in the zymogen granule. The protein resides in the nucleus envelope. The catalysed reaction is Endonucleolytic cleavage to 5'-phosphodinucleotide and 5'-phosphooligonucleotide end-products.. Functionally, serum endocuclease secreted into body fluids by a wide variety of exocrine and endocrine organs. Expressed by non-hematopoietic tissues and preferentially cleaves protein-free DNA. Among other functions, seems to be involved in cell death by apoptosis. Binds specifically to G-actin and blocks actin polymerization. Together with DNASE1L3, plays a key role in degrading neutrophil extracellular traps (NETs). NETs are mainly composed of DNA fibers and are released by neutrophils to bind pathogens during inflammation. Degradation of intravascular NETs by DNASE1 and DNASE1L3 is required to prevent formation of clots that obstruct blood vessels and cause organ damage following inflammation. The sequence is that of Deoxyribonuclease-1 (DNASE1) from Equus caballus (Horse).